A 192-amino-acid polypeptide reads, in one-letter code: dITP/XTP pyrophosphatase (192 aa).

Substrate is bound at residue 12–17 (TNNENK). Glu41 and Asp70 together coordinate Mg(2+). Asp70 (proton acceptor) is an active-site residue. Residues Ser71, 145-148 (FGFD), Lys168, and 173-174 (HR) each bind substrate.

The protein belongs to the HAM1 NTPase family. In terms of assembly, homodimer. Mg(2+) serves as cofactor.

The catalysed reaction is XTP + H2O = XMP + diphosphate + H(+). It carries out the reaction dITP + H2O = dIMP + diphosphate + H(+). The enzyme catalyses ITP + H2O = IMP + diphosphate + H(+). Pyrophosphatase that catalyzes the hydrolysis of nucleoside triphosphates to their monophosphate derivatives, with a high preference for the non-canonical purine nucleotides XTP (xanthosine triphosphate), dITP (deoxyinosine triphosphate) and ITP. Seems to function as a house-cleaning enzyme that removes non-canonical purine nucleotides from the nucleotide pool, thus preventing their incorporation into DNA/RNA and avoiding chromosomal lesions. The protein is dITP/XTP pyrophosphatase of Saccharolobus solfataricus (strain ATCC 35092 / DSM 1617 / JCM 11322 / P2) (Sulfolobus solfataricus).